A 302-amino-acid polypeptide reads, in one-letter code: Oxygen-dependent coproporphyrinogen-III oxidase (302 aa).

S94 contributes to the substrate binding site. A divalent metal cation contacts are provided by H98 and H108. The Proton donor role is filled by H108. 110 to 112 (NVR) contributes to the substrate binding site. A divalent metal cation contacts are provided by H147 and H177. The tract at residues 242–277 (YVEFNLVYDRGTLFGLQTGGRTESILMSMPPLVRWQ) is important for dimerization. Substrate is bound at residue 260-262 (GGR).

This sequence belongs to the aerobic coproporphyrinogen-III oxidase family. In terms of assembly, homodimer. The cofactor is a divalent metal cation.

Its subcellular location is the cytoplasm. It catalyses the reaction coproporphyrinogen III + O2 + 2 H(+) = protoporphyrinogen IX + 2 CO2 + 2 H2O. It participates in porphyrin-containing compound metabolism; protoporphyrin-IX biosynthesis; protoporphyrinogen-IX from coproporphyrinogen-III (O2 route): step 1/1. Involved in the heme biosynthesis. Catalyzes the aerobic oxidative decarboxylation of propionate groups of rings A and B of coproporphyrinogen-III to yield the vinyl groups in protoporphyrinogen-IX. The sequence is that of Oxygen-dependent coproporphyrinogen-III oxidase from Shewanella baltica (strain OS155 / ATCC BAA-1091).